A 764-amino-acid polypeptide reads, in one-letter code: Putative wall-associated receptor kinase-like 13 (764 aa).

The signal sequence occupies residues 1 to 26 (MRGNKNYYFLSLLYFLSLPILHFSSC). Over 27 to 379 (THKCGDIQIP…HRCIDYHIPE (353 aa)) the chain is Extracellular. N-linked (GlcNAc...) asparagine glycosylation is found at asparagine 78, asparagine 114, asparagine 121, asparagine 164, asparagine 233, asparagine 238, asparagine 259, and asparagine 283. The interval 308-372 (CTCDNHIASG…CINTSGGHRC (65 aa)) is atypical EGF-like. Intrachain disulfides connect cysteine 310–cysteine 323, cysteine 345–cysteine 363, and cysteine 352–cysteine 372. Residue asparagine 365 is glycosylated (N-linked (GlcNAc...) asparagine). Residues 380–400 (VMLGLGAGFFVLIVGGGIWWW) form a helical membrane-spanning segment. Residues 401–764 (RKLLRKRRMT…SGSTEIARSM (364 aa)) lie on the Cytoplasmic side of the membrane. One can recognise a Protein kinase domain in the interval 454-728 (FNDNRVIGQG…REVSTALERI (275 aa)). ATP-binding positions include 460 to 468 (IGQGGQGTV) and lysine 482. Tyrosine 527 is modified (phosphotyrosine). Aspartate 579 functions as the Proton acceptor in the catalytic mechanism. Residues threonine 613 and threonine 618 each carry the phosphothreonine modification. Tyrosine 626 bears the Phosphotyrosine mark.

This sequence belongs to the protein kinase superfamily. Ser/Thr protein kinase family.

It is found in the membrane. The enzyme catalyses L-seryl-[protein] + ATP = O-phospho-L-seryl-[protein] + ADP + H(+). It catalyses the reaction L-threonyl-[protein] + ATP = O-phospho-L-threonyl-[protein] + ADP + H(+). In terms of biological role, putative serine/threonine-protein kinase that may function as a signaling receptor of extracellular matrix component. The polypeptide is Putative wall-associated receptor kinase-like 13 (WAKL13) (Arabidopsis thaliana (Mouse-ear cress)).